The primary structure comprises 723 residues: tRNA (guanine(27)-N(2))-dimethyltransferase (723 aa).

The span at 1 to 10 shows a compositional bias: acidic residues; it reads MENMAEEELL. The tract at residues 1–72 is disordered; it reads MENMAEEELL…SLASVPEEAE (72 aa). At Thr-23 the chain carries Phosphothreonine. Residues 32 to 44 show a composition bias toward low complexity; that stretch reads PAADTALDSAPTP. Residues 45–59 are compositionally biased toward pro residues; that stretch reads DSAPAPALAPAPAPA. Ser-61 carries the phosphoserine modification. Positions 128 to 132 match the Nucleolar localization signal motif; it reads HKLRR. The C2H2-type zinc finger occupies 177-199; that stretch reads YHCIICSATITRRTDMLGHVKRH. The Trm1 methyltransferase domain maps to 220 to 679; it reads EVLKETDTDI…ASLTQFKSIL (460 aa). S-adenosyl-L-methionine is bound by residues Arg-253, Asp-300, Asp-348, and Ala-349. Positions 479, 482, 504, and 506 each coordinate Zn(2+). A Glycyl lysine isopeptide (Lys-Gly) (interchain with G-Cter in SUMO2) cross-link involves residue Lys-576. Ser-603 is modified (phosphoserine).

It belongs to the class I-like SAM-binding methyltransferase superfamily. Trm1 family.

It localises to the nucleus. The protein localises to the nucleolus. It catalyses the reaction guanosine(27) in tRNA(Tyr) + 2 S-adenosyl-L-methionine = N(2)-dimethylguanosine(27) in tRNA(Tyr) + 2 S-adenosyl-L-homocysteine + 2 H(+). Its function is as follows. Specifically dimethylates a single guanine residue at position 27 of tRNA(Tyr) using S-adenosyl-L-methionine as donor of the methyl groups. Dimethylation at position 27 of tRNA(Tyr) is required for efficient translation of tyrosine codons. Also required to maintain 3-(3-amino-3-carboxypropyl)uridine (acp3U) in the D-loop of several cytoplasmic tRNAs. The chain is tRNA (guanine(27)-N(2))-dimethyltransferase from Rattus norvegicus (Rat).